A 239-amino-acid chain; its full sequence is Ribonuclease PH (239 aa).

Phosphate is bound by residues Arg-86 and 124–126; that span reads GTR.

The protein belongs to the RNase PH family. In terms of assembly, homohexameric ring arranged as a trimer of dimers.

It catalyses the reaction tRNA(n+1) + phosphate = tRNA(n) + a ribonucleoside 5'-diphosphate. Phosphorolytic 3'-5' exoribonuclease that plays an important role in tRNA 3'-end maturation. Removes nucleotide residues following the 3'-CCA terminus of tRNAs; can also add nucleotides to the ends of RNA molecules by using nucleoside diphosphates as substrates, but this may not be physiologically important. Probably plays a role in initiation of 16S rRNA degradation (leading to ribosome degradation) during starvation. In Azoarcus sp. (strain BH72), this protein is Ribonuclease PH.